The following is a 372-amino-acid chain: DNA double-strand break repair protein Mre11 (372 aa).

Aspartate 8, histidine 10, aspartate 49, and asparagine 84 together coordinate Mn(2+). The active-site Proton donor is histidine 85. Residues histidine 161, histidine 190, and histidine 192 each coordinate Mn(2+).

The protein belongs to the MRE11/RAD32 family. Homodimer. Forms a heterotetramer composed of two Mre11 subunits and two Rad50 subunits. It depends on Mn(2+) as a cofactor.

With respect to regulation, nuclease activity is regulated by Rad50. Functionally, part of the Rad50/Mre11 complex, which is involved in the early steps of DNA double-strand break (DSB) repair. The complex may facilitate opening of the processed DNA ends to aid in the recruitment of HerA and NurA. Mre11 binds to DSB ends and has both double-stranded 3'-5' exonuclease activity and single-stranded endonuclease activity. This is DNA double-strand break repair protein Mre11 from Methanococcus maripaludis (strain DSM 14266 / JCM 13030 / NBRC 101832 / S2 / LL).